We begin with the raw amino-acid sequence, 83 residues long: Small ribosomal subunit protein uS17 (83 aa).

The protein belongs to the universal ribosomal protein uS17 family. Part of the 30S ribosomal subunit.

Its function is as follows. One of the primary rRNA binding proteins, it binds specifically to the 5'-end of 16S ribosomal RNA. The sequence is that of Small ribosomal subunit protein uS17 from Thermodesulfovibrio yellowstonii (strain ATCC 51303 / DSM 11347 / YP87).